Reading from the N-terminus, the 602-residue chain is Prostaglandin G/H synthase 1 (602 aa).

Residues Met-1–Leu-26 form the signal peptide. The EGF-like domain maps to Pro-34 to Thr-72. Disulfide bonds link Cys-38-Cys-49, Cys-39-Cys-161, Cys-43-Cys-59, and Cys-61-Cys-71. Residues Asn-70, Asn-106, and Asn-146 are each glycosylated (N-linked (GlcNAc...) asparagine). Residue His-209 is the Proton acceptor of the active site. The active-site For cyclooxygenase activity is the Tyr-387. A heme b-binding site is contributed by His-390. Cysteines 571 and 577 form a disulfide.

Belongs to the prostaglandin G/H synthase family. As to quaternary structure, homodimer. Heme b is required as a cofactor.

The protein localises to the microsome membrane. The protein resides in the endoplasmic reticulum membrane. The catalysed reaction is (5Z,8Z,11Z,14Z)-eicosatetraenoate + AH2 + 2 O2 = prostaglandin H2 + A + H2O. It carries out the reaction (5Z,8Z,11Z,14Z)-eicosatetraenoate + 2 O2 = prostaglandin G2. The enzyme catalyses prostaglandin G2 + AH2 = prostaglandin H2 + A + H2O. It catalyses the reaction (9Z,12Z)-octadecadienoate + AH2 + O2 = (9R)-hydroxy-(10E,12Z)-octadecadienoate + A + H2O. The catalysed reaction is (9Z,12Z)-octadecadienoate + AH2 + O2 = (9S)-hydroxy-(10E,12Z)-octadecadienoate + A + H2O. It carries out the reaction (9Z,12Z)-octadecadienoate + AH2 + O2 = (13S)-hydroxy-(9Z,11E)-octadecadienoate + A + H2O. The enzyme catalyses (9Z,12Z)-octadecadienoate + AH2 + O2 = (13R)-hydroxy-(9Z,11E)-octadecadienoate + A + H2O. It functions in the pathway lipid metabolism; prostaglandin biosynthesis. The cyclooxygenase activity is inhibited by nonsteroidal anti-inflammatory drugs (NSAIDs) including ibuprofen, flurbiprofen, ketoprofen, naproxen, flurbiprofen, anirolac, fenclofenac and diclofenac. Dual cyclooxygenase and peroxidase that plays an important role in the biosynthesis pathway of prostanoids, a class of C20 oxylipins mainly derived from arachidonate ((5Z,8Z,11Z,14Z)-eicosatetraenoate, AA, C20:4(n-6)), with a particular role in the inflammatory response. The cyclooxygenase activity oxygenates AA to the hydroperoxy endoperoxide prostaglandin G2 (PGG2), and the peroxidase activity reduces PGG2 to the hydroxy endoperoxide prostaglandin H2 (PGH2), the precursor of all 2-series prostaglandins and thromboxanes. This complex transformation is initiated by abstraction of hydrogen at carbon 13 (with S-stereochemistry), followed by insertion of molecular O2 to form the endoperoxide bridge between carbon 9 and 11 that defines prostaglandins. The insertion of a second molecule of O2 (bis-oxygenase activity) yields a hydroperoxy group in PGG2 that is then reduced to PGH2 by two electrons. Involved in the constitutive production of prostanoids in particular in the stomach and platelets. In gastric epithelial cells, it is a key step in the generation of prostaglandins, such as prostaglandin E2 (PGE2), which plays an important role in cytoprotection. In platelets, it is involved in the generation of thromboxane A2 (TXA2), which promotes platelet activation and aggregation, vasoconstriction and proliferation of vascular smooth muscle cells. Can also use linoleate (LA, (9Z,12Z)-octadecadienoate, C18:2(n-6)) as substrate and produce hydroxyoctadecadienoates (HODEs) in a regio- and stereospecific manner, being (9R)-HODE ((9R)-hydroxy-(10E,12Z)-octadecadienoate) and (13S)-HODE ((13S)-hydroxy-(9Z,11E)-octadecadienoate) its major products. The sequence is that of Prostaglandin G/H synthase 1 from Mus musculus (Mouse).